A 304-amino-acid polypeptide reads, in one-letter code: Ribonuclease Z (304 aa).

7 residues coordinate Zn(2+): histidine 63, histidine 65, aspartate 67, histidine 68, histidine 141, aspartate 208, and histidine 266. The active-site Proton acceptor is the aspartate 67.

It belongs to the RNase Z family. In terms of assembly, homodimer. Requires Zn(2+) as cofactor.

The catalysed reaction is Endonucleolytic cleavage of RNA, removing extra 3' nucleotides from tRNA precursor, generating 3' termini of tRNAs. A 3'-hydroxy group is left at the tRNA terminus and a 5'-phosphoryl group is left at the trailer molecule.. Its function is as follows. Zinc phosphodiesterase, which displays some tRNA 3'-processing endonuclease activity. Probably involved in tRNA maturation, by removing a 3'-trailer from precursor tRNA. This chain is Ribonuclease Z, found in Chlamydia muridarum (strain MoPn / Nigg).